The following is a 198-amino-acid chain: Outer-membrane lipoprotein carrier protein (198 aa).

The signal sequence occupies residues 1-17; that stretch reads MKKILLSLCFLSSVAFA.

The protein belongs to the LolA family. Monomer.

It is found in the periplasm. In terms of biological role, participates in the translocation of lipoproteins from the inner membrane to the outer membrane. Only forms a complex with a lipoprotein if the residue after the N-terminal Cys is not an aspartate (The Asp acts as a targeting signal to indicate that the lipoprotein should stay in the inner membrane). The protein is Outer-membrane lipoprotein carrier protein of Aliivibrio salmonicida (strain LFI1238) (Vibrio salmonicida (strain LFI1238)).